Consider the following 367-residue polypeptide: Homoserine O-acetyltransferase (367 aa).

Residues 44 to 350 enclose the AB hydrolase-1 domain; that stretch reads NVIMVEHAWT…AYGHDAFLLE (307 aa). Ser150 (nucleophile) is an active-site residue. Arg217 is a binding site for substrate. Catalysis depends on residues Asp311 and His344. Substrate is bound at residue Asp345.

The protein belongs to the AB hydrolase superfamily. MetX family. As to quaternary structure, homodimer.

It localises to the cytoplasm. The enzyme catalyses L-homoserine + acetyl-CoA = O-acetyl-L-homoserine + CoA. It participates in amino-acid biosynthesis; L-methionine biosynthesis via de novo pathway; O-acetyl-L-homoserine from L-homoserine: step 1/1. Functionally, transfers an acetyl group from acetyl-CoA to L-homoserine, forming acetyl-L-homoserine. In vitro, can also use propionyl-CoA or butiryl-CoA as acyl donor. The sequence is that of Homoserine O-acetyltransferase from Trichlorobacter lovleyi (strain ATCC BAA-1151 / DSM 17278 / SZ) (Geobacter lovleyi).